A 638-amino-acid chain; its full sequence is MNNQGKNIIVWAVIFVFVILLFNVFQSDGLLSSKNNISFSEFLTKVDEKTVNSVKIQGRIIEGTSNDGSSFSTYAPDYPDLVNRLNNNDVNIEVVPPETRMNTFLSFLISWFPMLLLIGVWVFFMRQMHGGGKAMGFGKSKAKLLSDKGPKITFKDVAGIDEAKDELTEIVDFLRDPSKFQKLGGKIPKGCLLIGPPGTGKTLLAKAIAGEANVPFFSISGSDFVEMFVGVGASRVRDMFEQGKRNAPCIIFIDEIDAVGRHRGIGMGGGNDEREQTLNQMLVEMDGFEANEGVVIIAATNRPDVLDNALLRPGRFDRQITVSNPDIDGREKILQVHLKKVKYSTKIVPRIIARGTPGFSGAELANLVNEATLIAARRNKKEVEMHDLEEAKDKVMMGVERRSMIMSDEQKKLTAYHEGGHALVGLYCLASDPIHKATIIPRGRALGMVMRLPENDRFSMPRDKMEADIAVAMAGRVAEEIIFGKEKVTSGASSDIKMATRMAKAMVTDWGLSDKVGPVYHGSASEDMYTNRNSSSDRSESTSELIDEEVKKIVTTGYDLAKDILTKHLDQLHILAKALIEYETLSGQQIKNLLSSRQLDSEEENNFPFGAASSTIKIAEEKDLKKAKPIKAKKEDKS.

The Cytoplasmic segment spans residues 1–4 (MNNQ). The helical transmembrane segment at 5–25 (GKNIIVWAVIFVFVILLFNVF) threads the bilayer. The Periplasmic segment spans residues 26–103 (QSDGLLSSKN…VVPPETRMNT (78 aa)). The helical transmembrane segment at 104-124 (FLSFLISWFPMLLLIGVWVFF) threads the bilayer. Topologically, residues 125-638 (MRQMHGGGKA…PIKAKKEDKS (514 aa)) are cytoplasmic. Position 195–202 (195–202 (GPPGTGKT)) interacts with ATP. Histidine 417 lines the Zn(2+) pocket. Glutamate 418 is an active-site residue. Positions 421 and 495 each coordinate Zn(2+). The disordered stretch occupies residues 523–544 (SASEDMYTNRNSSSDRSESTSE).

In the central section; belongs to the AAA ATPase family. The protein in the C-terminal section; belongs to the peptidase M41 family. As to quaternary structure, homohexamer. The cofactor is Zn(2+).

It localises to the cell inner membrane. In terms of biological role, acts as a processive, ATP-dependent zinc metallopeptidase for both cytoplasmic and membrane proteins. Plays a role in the quality control of integral membrane proteins. The sequence is that of ATP-dependent zinc metalloprotease FtsH from Rickettsia bellii (strain RML369-C).